Consider the following 728-residue polypeptide: Histone demethylase JHD2 (728 aa).

The JmjN domain maps to 4–47; sequence IPALYPTEQEFKNPIDYLSNPHIKRLGVRYGMVKVVPPNGFCPP. Residues 235–285 form a PHD-type zinc finger; that stretch reads DDACIVCRKTNDPKRTILCDSCDKPFHIYCLSPPLERVPSGDWICNTCIVG. Residues 381-549 form the JmjC domain; that stretch reads KYCDHPMNLT…YGFGAITDYK (169 aa). Residues His427, Asp430, and His517 each contribute to the Fe cation site.

This sequence belongs to the JARID1 histone demethylase family. It depends on Fe(2+) as a cofactor.

It localises to the nucleus. The enzyme catalyses N(6),N(6),N(6)-trimethyl-L-lysyl(4)-[histone H3] + 3 2-oxoglutarate + 3 O2 = L-lysyl(4)-[histone H3] + 3 formaldehyde + 3 succinate + 3 CO2. In terms of biological role, histone demethylase that demethylates 'Lys-4' of histone H3, thereby playing a central role in histone code. Demethylates trimethylated H3 'Lys-4'. The chain is Histone demethylase JHD2 (JHD2) from Saccharomyces cerevisiae (strain ATCC 204508 / S288c) (Baker's yeast).